Consider the following 121-residue polypeptide: MNALQEDTPPGPSTVFRPPTSSRPLETPHCREIRIGIAGITITLSLCGCANARAPTLRSATADNSESTGFKNVPDLRTDQPKPPSKKRSCDPSEYRVSELKESLTTTTPSRPRTARRCIRL.

2 disordered regions span residues 1 to 28 (MNAL…LETP) and 57 to 121 (LRSA…CIRL). Positions 58–70 (RSATADNSESTGF) are enriched in polar residues. Over residues 88–102 (RSCDPSEYRVSELKE) the composition is skewed to basic and acidic residues.

Belongs to the gyrovirus apoptin family.

It localises to the host nucleus. Its function is as follows. May act as transcriptional regulator. Induces apoptosis in infected cells. Element of infectious replication cycle. The protein is Apoptin (VP3) of Gallus gallus (Chicken).